The sequence spans 291 residues: Flavonol synthase/flavanone 3-hydroxylase (291 aa).

Residues cysteine 151 to proline 250 form the Fe2OG dioxygenase domain. Histidine 175, aspartate 177, and histidine 231 together coordinate Fe cation.

Belongs to the iron/ascorbate-dependent oxidoreductase family. It depends on L-ascorbate as a cofactor. Requires Fe cation as cofactor.

Its subcellular location is the cytoplasm. The enzyme catalyses a (2R,3R)-dihydroflavonol + 2-oxoglutarate + O2 = a flavonol + succinate + CO2 + H2O. The catalysed reaction is a (2S)-flavan-4-one + 2-oxoglutarate + O2 = a (2R,3R)-dihydroflavonol + succinate + CO2. Its pathway is secondary metabolite biosynthesis; flavonoid biosynthesis. Its function is as follows. Catalyzes the formation of flavonols from dihydroflavonols. It can act on dihydrokaempferol to produce kaempferol, on dihydroquercetin to produce quercitin and on dihydromyricetin to produce myricetin. This Matthiola incana (Common stock) protein is Flavonol synthase/flavanone 3-hydroxylase.